A 162-amino-acid polypeptide reads, in one-letter code: tRNA (cytidine(34)-2'-O)-methyltransferase (162 aa).

S-adenosyl-L-methionine contacts are provided by Leu-80, Gly-102, Leu-124, and Ser-132.

The protein belongs to the class IV-like SAM-binding methyltransferase superfamily. RNA methyltransferase TrmH family. TrmL subfamily. As to quaternary structure, homodimer.

It is found in the cytoplasm. The enzyme catalyses cytidine(34) in tRNA + S-adenosyl-L-methionine = 2'-O-methylcytidine(34) in tRNA + S-adenosyl-L-homocysteine + H(+). It catalyses the reaction 5-carboxymethylaminomethyluridine(34) in tRNA(Leu) + S-adenosyl-L-methionine = 5-carboxymethylaminomethyl-2'-O-methyluridine(34) in tRNA(Leu) + S-adenosyl-L-homocysteine + H(+). Methylates the ribose at the nucleotide 34 wobble position in the two leucyl isoacceptors tRNA(Leu)(CmAA) and tRNA(Leu)(cmnm5UmAA). Catalyzes the methyl transfer from S-adenosyl-L-methionine to the 2'-OH of the wobble nucleotide. This Acidovorax sp. (strain JS42) protein is tRNA (cytidine(34)-2'-O)-methyltransferase.